We begin with the raw amino-acid sequence, 521 residues long: MIPVSLVVVVVGGWTVVYLTDLVLKSSVYFKHSYEDWLESNGLSISPFHIRWQTAVFNRAFYSWGRRKARMLYQWFNFGMVFGVIAMFSSFFLLGKTLMQTLAQMMADSPSSYSSSSSSSSSSSSSSSSSSSSSSSSSLHNEQVLQVVVPGINLPVNQLTYFFAAVLISGVVHEIGHGIAAIREQVRFNGFGIFLFIIYPGAFVDLFTTHLQLISPVQQLRIFCAGIWHNFVLALLGILALVLLPVILLPFYYTGVGVLITEVAEDSPAIGPRGLFVGDLVTHLQDCPVTNVQDWNECLDTIAYEPQIGYCISASTLQQLSFPVRAYKRLDGSTECCNNHSLTDVCFSYRNNFNKRLHTCLPARKAVEATQVCRTNKDCKKSSSSSFCIIPSLETHTRLIKVKHPPQIDMLYVGHPLHLHYTVSITSFIPRFNFLSIDLPVVVETFVKYLISLSGALAIVNAVPCFALDGQWILNSFLDATLTSVIGDNDVKDLIGFFILLGGSVLLAANVTLGLWMVTAR.

Residues 1–3 (MIP) are Cytoplasmic-facing. A helical membrane pass occupies residues 4 to 24 (VSLVVVVVGGWTVVYLTDLVL). Residues 25 to 74 (KSSVYFKHSYEDWLESNGLSISPFHIRWQTAVFNRAFYSWGRRKARMLYQ) lie on the Lumenal side of the membrane. 2 consecutive transmembrane segments (helical) span residues 75 to 95 (WFNF…FLLG) and 96 to 107 (KTLMQTLAQMMA). At 108–146 (DSPSSYSSSSSSSSSSSSSSSSSSSSSSSSSLHNEQVLQ) the chain is on the lumenal side. Residues 113–137 (YSSSSSSSSSSSSSSSSSSSSSSSS) form a disordered region. A helical membrane pass occupies residues 147–171 (VVVPGINLPVNQLTYFFAAVLISGV). Residue H173 coordinates Zn(2+). The active site involves E174. 3 helical membrane-spanning segments follow: residues 176–188 (GHGI…QVRF), 189–211 (NGFG…TTHL), and 231–253 (FVLA…PFYY). Zn(2+) is bound at residue H177. Over 254 to 448 (TGVGVLITEV…LPVVVETFVK (195 aa)) the chain is Lumenal. N339 is a glycosylation site (N-linked (GlcNAc...) asparagine). 2 helical membrane passes run 449–466 (YLIS…VPCF) and 467–478 (ALDGQWILNSFL). The Lumenal portion of the chain corresponds to 479–494 (DATLTSVIGDNDVKDL). Residues 495–515 (IGFFILLGGSVLLAANVTLGL) form a helical membrane-spanning segment. Residues 516–521 (WMVTAR) are Cytoplasmic-facing.

The protein belongs to the peptidase M50A family. Zn(2+) is required as a cofactor.

Its subcellular location is the membrane. The protein localises to the cytoplasm. It is found in the golgi apparatus membrane. It catalyses the reaction Cleaves several transcription factors that are type-2 transmembrane proteins within membrane-spanning domains. Known substrates include sterol regulatory element-binding protein (SREBP) -1, SREBP-2 and forms of the transcriptional activator ATF6. SREBP-2 is cleaved at the site 477-DRSRILL-|-CVLTFLCLSFNPLTSLLQWGGA-505. The residues Asn-Pro, 11 residues distal to the site of cleavage in the membrane-spanning domain, are important for cleavage by S2P endopeptidase. Replacement of either of these residues does not prevent cleavage, but there is no cleavage if both of these residues are replaced.. In terms of biological role, zinc metalloprotease that mediates intramembrane proteolysis of proteins such as ATF6, ATF6B, SREBF1/SREBP1 and SREBF2/SREBP2. Catalyzes the second step in the proteolytic activation of the sterol regulatory element-binding proteins (SREBPs) SREBF1/SREBP1 and SREBF2/SREBP2: cleaves SREBPs within the first transmembrane segment, thereby releasing the N-terminal segment with a portion of the transmembrane segment attached. Mature N-terminal SREBP fragments shuttle to the nucleus and activate gene transcription. Also mediates the second step in the proteolytic activation of the cyclic AMP-dependent transcription factor ATF-6 (ATF6 and ATF6B). Involved in intramembrane proteolysis during bone formation. In astrocytes and osteoblasts, upon DNA damage and ER stress, mediates the second step of the regulated intramembrane proteolytic activation of the transcription factor CREB3L1, leading to the inhibition of cell-cycle progression. In Pongo abelii (Sumatran orangutan), this protein is Membrane-bound transcription factor site-2 protease (MBTPS2).